A 132-amino-acid polypeptide reads, in one-letter code: Translation initiation factor 5A (132 aa).

Lysine 36 is modified (hypusine).

Belongs to the eIF-5A family.

Its subcellular location is the cytoplasm. Functions by promoting the formation of the first peptide bond. The polypeptide is Translation initiation factor 5A (Methanosphaera stadtmanae (strain ATCC 43021 / DSM 3091 / JCM 11832 / MCB-3)).